A 106-amino-acid chain; its full sequence is DNA-directed RNA polymerase subunit Rpo6 (106 aa).

The protein belongs to the archaeal Rpo6/eukaryotic RPB6 RNA polymerase subunit family. As to quaternary structure, part of the RNA polymerase complex.

The protein resides in the cytoplasm. The enzyme catalyses RNA(n) + a ribonucleoside 5'-triphosphate = RNA(n+1) + diphosphate. DNA-dependent RNA polymerase (RNAP) catalyzes the transcription of DNA into RNA using the four ribonucleoside triphosphates as substrates. This Pyrobaculum aerophilum (strain ATCC 51768 / DSM 7523 / JCM 9630 / CIP 104966 / NBRC 100827 / IM2) protein is DNA-directed RNA polymerase subunit Rpo6.